The primary structure comprises 133 residues: Large ribosomal subunit protein bL19 (133 aa).

It belongs to the bacterial ribosomal protein bL19 family.

Its function is as follows. This protein is located at the 30S-50S ribosomal subunit interface and may play a role in the structure and function of the aminoacyl-tRNA binding site. In Sulfurihydrogenibium sp. (strain YO3AOP1), this protein is Large ribosomal subunit protein bL19.